A 122-amino-acid chain; its full sequence is Ribonuclease P protein subunit p14 (122 aa).

This sequence belongs to the eukaryotic/archaeal RNase P protein component 2 family. As to quaternary structure, RNase P consists of a catalytic RNA moiety and about 10 protein subunits; POP1, POP4, POP5, POP7, RPP14, RPP21, RPP25, RPP30, RPP38 and RPP40. Within the RNase P complex, POP1, POP7 and RPP25 form the 'finger' subcomplex, POP5, RPP14, RPP40 and homodimeric RPP30 form the 'palm' subcomplex, and RPP21, POP4 and RPP38 form the 'wrist' subcomplex. All subunits of the RNase P complex interact with the catalytic RNA.

It localises to the nucleus. It is found in the nucleolus. Its function is as follows. Component of ribonuclease P, a ribonucleoprotein complex that generates mature tRNA molecules by cleaving their 5'-ends. The chain is Ribonuclease P protein subunit p14 (Rpp14) from Mus musculus (Mouse).